The sequence spans 374 residues: Tuliposide A-converting enzyme b2, amyloplastic (374 aa).

An amyloplast-targeting transit peptide spans Met1 to Thr68. The active-site Acyl-ester intermediate is the Ser226. Active-site charge relay system residues include Asp316 and His348.

Belongs to the AB hydrolase superfamily. As to quaternary structure, homodimer. Highly expressed in pistil and bulb scales. Lower expression in stem, and barely detected in root, leaf, petal and stamen.

It localises to the plastid. Its subcellular location is the amyloplast. It catalyses the reaction 6-tuliposide A = tulipalin A + D-glucose. Functionally, lactone-forming carboxylesterases, specifically catalyzing intramolecular transesterification, but not hydrolysis. Involved in the biosynthesis of tulipalins, defensive chemicals that show antimicrobial activities against a broad range of strains of bacteria and fungi. Substrates are 6-tuliposide A &gt; 6-tuliposide B. The protein is Tuliposide A-converting enzyme b2, amyloplastic (TCEA-B2) of Tulipa gesneriana (Garden tulip).